A 100-amino-acid polypeptide reads, in one-letter code: MKQLIFLLICLLSLLQYRLWLGDNNLSEYVLLQTQIAGQEQSNGKLVARNQILKEEIIDLKRGTEAIEERARNELGMVKEGETFYRVVGSELRERNPFNR.

The Cytoplasmic portion of the chain corresponds to 1 to 3 (MKQ). The helical transmembrane segment at 4 to 21 (LIFLLICLLSLLQYRLWL) threads the bilayer. The Periplasmic segment spans residues 22-100 (GDNNLSEYVL…ELRERNPFNR (79 aa)). Residues 49 to 73 (RNQILKEEIIDLKRGTEAIEERARN) adopt a coiled-coil conformation.

This sequence belongs to the FtsB family. In terms of assembly, part of a complex composed of FtsB, FtsL and FtsQ.

It is found in the cell inner membrane. In terms of biological role, essential cell division protein. May link together the upstream cell division proteins, which are predominantly cytoplasmic, with the downstream cell division proteins, which are predominantly periplasmic. This chain is Cell division protein FtsB, found in Shewanella frigidimarina (strain NCIMB 400).